Here is a 136-residue protein sequence, read N- to C-terminus: Biopolymer transport protein exbD2 (136 aa).

Topologically, residues 1–23 are cytoplasmic; the sequence is MAFSTGGNRGPMADINVTPLVDV. The helical transmembrane segment at 24–44 threads the bilayer; sequence MLVLLIIFIVTAPIMTYPIAV. Residues 45 to 136 are Periplasmic-facing; the sequence is DLPQRVLNPP…SQMKKIGFMQ (92 aa).

It belongs to the ExbD/TolR family. In terms of assembly, the accessory proteins ExbB and ExbD seem to form a complex with TonB.

It is found in the cell inner membrane. In terms of biological role, involved in the TonB-dependent energy-dependent transport of various receptor-bound substrates. The protein is Biopolymer transport protein exbD2 (exbD2) of Xanthomonas campestris pv. campestris (strain ATCC 33913 / DSM 3586 / NCPPB 528 / LMG 568 / P 25).